Reading from the N-terminus, the 99-residue chain is UPF0473 protein SMU_2077c (99 aa).

It belongs to the UPF0473 family.

This chain is UPF0473 protein SMU_2077c, found in Streptococcus mutans serotype c (strain ATCC 700610 / UA159).